The chain runs to 211 residues: MSVGILGTKLGMTQIFDEAGVAIPVTVVQVGPCVVTQVKSKQTDGYAAIQVGYGEVKPKALNRPLLGHLAKSSAPALRHLKEYHTDGSSDYALGQEIKADIFSVGELVDVIGTSIGRGFAGNQKRNNFGRGPMSHGSKNHRAPGSIGAGTTPGRVYPGKRMAGRLGGTRVTIRKLTVIRVDAERNLLLIKGAVPGKPGALLSIVPAKKVGK.

Residues 122–156 (NQKRNNFGRGPMSHGSKNHRAPGSIGAGTTPGRVY) are disordered.

It belongs to the universal ribosomal protein uL3 family. As to quaternary structure, part of the 50S ribosomal subunit. Forms a cluster with proteins L14 and L19.

In terms of biological role, one of the primary rRNA binding proteins, it binds directly near the 3'-end of the 23S rRNA, where it nucleates assembly of the 50S subunit. The sequence is that of Large ribosomal subunit protein uL3 from Nostoc sp. (strain PCC 7120 / SAG 25.82 / UTEX 2576).